Reading from the N-terminus, the 506-residue chain is Serine/threonine-protein kinase D6PKL1 (506 aa).

Positions 1–96 (MASKYGSGVL…TCSSFSGNNK (96 aa)) are disordered. Over residues 12–23 (ENKKEKGDKETP) the composition is skewed to basic and acidic residues. Polar residues predominate over residues 24-54 (ETSYSSQSVSVNTLADQVSSTLSFAPSSDSK). Residues 55–67 (TGGEVKFNEKSDQ) are compositionally biased toward basic and acidic residues. Positions 77–92 (STSSDISDESTCSSFS) are enriched in low complexity. Positions 123–456 (FRLLKRLGCG…ATEMKQHPFF (334 aa)) constitute a Protein kinase domain. Residues 129–137 (LGCGDIGTV) and K152 contribute to the ATP site. D248 (proton acceptor) is an active-site residue. The disordered stretch occupies residues 475–495 (PVDYESAPATPAAATSTSVKS). A compositionally biased stretch (low complexity) spans 480 to 492 (SAPATPAAATSTS).

Belongs to the protein kinase superfamily. AGC Ser/Thr protein kinase family.

The protein localises to the cell membrane. The enzyme catalyses L-seryl-[protein] + ATP = O-phospho-L-seryl-[protein] + ADP + H(+). It carries out the reaction L-threonyl-[protein] + ATP = O-phospho-L-threonyl-[protein] + ADP + H(+). Functionally, protein kinase that regulates the auxin transport activity of PIN auxin efflux facilitators by direct phosphorylation. D6PK-mediated PIN phosphorylation promotes auxin transport in the hypocotyl and this is a prerequisite for PHOT1-dependent hypocotyl bending. This Arabidopsis thaliana (Mouse-ear cress) protein is Serine/threonine-protein kinase D6PKL1 (D6PKL1).